Reading from the N-terminus, the 377-residue chain is Ribosomal RNA large subunit methyltransferase G (377 aa).

This sequence belongs to the methyltransferase superfamily. RlmG family.

It localises to the cytoplasm. It catalyses the reaction guanosine(1835) in 23S rRNA + S-adenosyl-L-methionine = N(2)-methylguanosine(1835) in 23S rRNA + S-adenosyl-L-homocysteine + H(+). Its function is as follows. Specifically methylates the guanine in position 1835 (m2G1835) of 23S rRNA. In Streptomyces coelicolor (strain ATCC BAA-471 / A3(2) / M145), this protein is Ribosomal RNA large subunit methyltransferase G.